Reading from the N-terminus, the 702-residue chain is Arylphorin (702 aa).

A signal peptide spans 1–16 (MQTVLFLAALVSLAAA). 2 N-linked (GlcNAc...) asparagine glycosylation sites follow: Asn-211 and Asn-481.

This sequence belongs to the hemocyanin family. As to expression, hemolymph.

It is found in the secreted. Its function is as follows. Larval storage protein (LSP) which may serve as a store of amino acids for synthesis of adult proteins. Binds the A.niger cell wall component alpha-1,3-glucan, a fungal pathogen-associated molecular pattern (PAMP) that activates the host immune response. The protein is Arylphorin (LOC113516268) of Galleria mellonella (Greater wax moth).